Consider the following 155-residue polypeptide: Small ribosomal subunit protein uS7cz/uS7cy (155 aa).

The protein belongs to the universal ribosomal protein uS7 family. As to quaternary structure, part of the 30S ribosomal subunit.

It is found in the plastid. The protein localises to the chloroplast. In terms of biological role, one of the primary rRNA binding proteins, it binds directly to 16S rRNA where it nucleates assembly of the head domain of the 30S subunit. The sequence is that of Small ribosomal subunit protein uS7cz/uS7cy (rps7-A) from Jasminum nudiflorum (Winter jasmine).